Consider the following 204-residue polypeptide: Minor allergen Alt a 7 (204 aa).

In terms of domain architecture, Flavodoxin-like spans Ile5–Phe195.

Belongs to the WrbA family.

It localises to the cytoplasm. The polypeptide is Minor allergen Alt a 7 (ALTA7) (Alternaria alternata (Alternaria rot fungus)).